Here is a 55-residue protein sequence, read N- to C-terminus: MAKQNTVLIKLVSSADTGFFYVKKKNPRKTTEKLEFKKYDPVARKHVVFKEAKMK.

This sequence belongs to the bacterial ribosomal protein bL33 family.

The chain is Large ribosomal subunit protein bL33 from Rhodospirillum centenum (strain ATCC 51521 / SW).